The following is a 62-amino-acid chain: Alpha-conotoxin Vt1.27 (62 aa).

The first 21 residues, 1–21, serve as a signal peptide directing secretion; sequence MGMRMMFTVFLLVVLATTVVS. Residues 22 to 40 constitute a propeptide that is removed on maturation; sequence FTLDRASDGASAAADLVAR. 2 cysteine pairs are disulfide-bonded: cysteine 46-cysteine 52 and cysteine 47-cysteine 61.

The protein belongs to the conotoxin A superfamily. In terms of tissue distribution, expressed by the venom duct.

The protein resides in the secreted. Its function is as follows. The short (45-61) amidated synthetic peptide inhibits the rat neuronal alpha-3-beta-2/CHRNA3-CHRNB2 nicotinic acetylcholine receptor (nAChR) (IC(50)=1.16 uM). It also inhibits Cav2.2/CACNA1C voltage-gated calcium channel (IC(50)=398 nM). In vivo, when tested in rat pain models, this short amidated peptide increases the pain threshold. This Conus planorbis (Planorbis cone) protein is Alpha-conotoxin Vt1.27.